Reading from the N-terminus, the 577-residue chain is 5'-nucleotidase (577 aa).

The first 30 residues, 1–30 (MPRVPSASATGSSALLSLLCAFSLGRAAPF), serve as a signal peptide directing secretion. Zn(2+) contacts are provided by Asp-39, His-41, Asp-86, and Asn-118. Asn-135 carries N-linked (GlcNAc...) asparagine glycosylation. His-221 and His-244 together coordinate Zn(2+). Residue Asn-246 participates in substrate binding. 2 N-linked (GlcNAc...) asparagine glycosylation sites follow: Asn-311 and Asn-347. Cystine bridges form between Cys-353-Cys-358 and Cys-365-Cys-387. Substrate is bound at residue Arg-354. Residues Gln-390 and Arg-395 each coordinate substrate. Asn-403 carries N-linked (GlcNAc...) asparagine glycosylation. Phe-417 provides a ligand contact to substrate. An intrachain disulfide couples Cys-476 to Cys-479. 500-506 (YIAEGGD) is a binding site for substrate. Ser-552 is lipidated: GPI-anchor amidated serine. A propeptide spans 553 to 577 (ATLPIINLKIGLSLFAFLTWFLHCS) (removed in mature form).

This sequence belongs to the 5'-nucleotidase family. Homodimer. Requires Zn(2+) as cofactor.

Its subcellular location is the cell membrane. The enzyme catalyses a ribonucleoside 5'-phosphate + H2O = a ribonucleoside + phosphate. Functionally, hydrolyzes extracellular nucleotides into membrane permeable nucleosides. This chain is 5'-nucleotidase, found in Diplobatis ommata (Ocellated electric ray).